A 341-amino-acid polypeptide reads, in one-letter code: Phosphate acyltransferase (341 aa).

This sequence belongs to the PlsX family. As to quaternary structure, homodimer. Probably interacts with PlsY.

The protein localises to the cytoplasm. It carries out the reaction a fatty acyl-[ACP] + phosphate = an acyl phosphate + holo-[ACP]. It functions in the pathway lipid metabolism; phospholipid metabolism. Catalyzes the reversible formation of acyl-phosphate (acyl-PO(4)) from acyl-[acyl-carrier-protein] (acyl-ACP). This enzyme utilizes acyl-ACP as fatty acyl donor, but not acyl-CoA. The protein is Phosphate acyltransferase of Photobacterium profundum (strain SS9).